The primary structure comprises 969 residues: Translation initiation factor IF-2 (969 aa).

The span at 49–63 (HLRKSHGATDGDKRK) shows a compositional bias: basic and acidic residues. Disordered stretches follow at residues 49-85 (HLRK…KART), 100-128 (DDVS…REEE), and 143-380 (LRER…SFQA). A compositionally biased stretch (low complexity) spans 105-114 (VAEQGQAQVA). Positions 143–181 (LRERQERLEREEAERRAREEAAEAERRRAEEEAAAKRAA) are enriched in basic and acidic residues. Low complexity predominate over residues 182–206 (AEAAAAQQAAQQAAAAQQAAAPADS). Positions 209–260 (DEARAAAERAAQREAAKKAEDAAREAAEKARAEQEEIRKRREAAEAEARAIR) are enriched in basic and acidic residues. Residues 301-323 (AQARPAAKKPAAAPAATPAPAGA) are compositionally biased toward low complexity. Residues 353-366 (SSGGVDRGWRGGPK) are compositionally biased toward gly residues. Residues 469-638 (PRPPVVTVMG…LLQAEVLELK (170 aa)) enclose the tr-type G domain. Residues 478–485 (GHVDHGKT) are G1. 478–485 (GHVDHGKT) contacts GTP. Residues 503–507 (GITQH) are G2. The segment at 524 to 527 (DTPG) is G3. Residues 524 to 528 (DTPGH) and 578 to 581 (NKID) each bind GTP. Residues 578-581 (NKID) are G4. The interval 614-616 (SAK) is G5.

This sequence belongs to the TRAFAC class translation factor GTPase superfamily. Classic translation factor GTPase family. IF-2 subfamily.

It localises to the cytoplasm. One of the essential components for the initiation of protein synthesis. Protects formylmethionyl-tRNA from spontaneous hydrolysis and promotes its binding to the 30S ribosomal subunits. Also involved in the hydrolysis of GTP during the formation of the 70S ribosomal complex. This chain is Translation initiation factor IF-2, found in Burkholderia multivorans (strain ATCC 17616 / 249).